The primary structure comprises 360 residues: 3-dehydroquinate synthase (360 aa).

Residues 70–75, 104–108, 128–129, Lys141, and Lys150 each bind NAD(+); these read DGEKYK, GVIGD, and TT. Zn(2+)-binding residues include Glu183, His246, and His263.

The protein belongs to the sugar phosphate cyclases superfamily. Dehydroquinate synthase family. Co(2+) is required as a cofactor. Requires Zn(2+) as cofactor. NAD(+) serves as cofactor.

The protein resides in the cytoplasm. It carries out the reaction 7-phospho-2-dehydro-3-deoxy-D-arabino-heptonate = 3-dehydroquinate + phosphate. Its pathway is metabolic intermediate biosynthesis; chorismate biosynthesis; chorismate from D-erythrose 4-phosphate and phosphoenolpyruvate: step 2/7. Its function is as follows. Catalyzes the conversion of 3-deoxy-D-arabino-heptulosonate 7-phosphate (DAHP) to dehydroquinate (DHQ). The polypeptide is 3-dehydroquinate synthase (Acinetobacter baumannii (strain SDF)).